We begin with the raw amino-acid sequence, 97 residues long: Acylphosphatase (97 aa).

The region spanning 9–95 is the Acylphosphatase-like domain; the sequence is TRHLRIHGLV…CDAQGFEQRE (87 aa). Residues Arg-24 and Asn-42 contribute to the active site.

It belongs to the acylphosphatase family.

The catalysed reaction is an acyl phosphate + H2O = a carboxylate + phosphate + H(+). The sequence is that of Acylphosphatase (acyP) from Acidovorax sp. (strain JS42).